A 208-amino-acid polypeptide reads, in one-letter code: U11/U12 small nuclear ribonucleoprotein 35 kDa protein (208 aa).

One can recognise an RRM domain in the interval 50 to 128 (LTLFVARLNP…YELLVDVEQE (79 aa)). Residues 133–208 (GWRPRRLGGG…TEDRTHRHTY (76 aa)) are disordered. Positions 171-208 (RPAEPRGRETERERDRRDYRDRRHERTHTEDRTHRHTY) are enriched in basic and acidic residues.

The protein resides in the nucleus. This Danio rerio (Zebrafish) protein is U11/U12 small nuclear ribonucleoprotein 35 kDa protein (snrnp35).